A 186-amino-acid chain; its full sequence is Dirigent protein 4 (186 aa).

The signal sequence occupies residues 1-20 (MGKNLGLVVSFYLCITFALG). Residues N67, N126, N169, and N180 are each glycosylated (N-linked (GlcNAc...) asparagine).

This sequence belongs to the plant dirigent protein family. As to quaternary structure, homodimer.

It localises to the secreted. The protein localises to the extracellular space. It is found in the apoplast. Functionally, dirigent proteins impart stereoselectivity on the phenoxy radical-coupling reaction, yielding optically active lignans from two molecules of coniferyl alcohol in the biosynthesis of lignans, flavonolignans, and alkaloids and thus plays a central role in plant secondary metabolism. In Arabidopsis thaliana (Mouse-ear cress), this protein is Dirigent protein 4 (DIR4).